The sequence spans 538 residues: Growth factor receptor-bound protein 14 (538 aa).

Residues 1–73 are disordered; sequence MTTSLQDGQS…KAKDLEVQET (73 aa). At threonine 2 the chain carries N-acetylthreonine. The span at 54 to 69 shows a compositional bias: basic and acidic residues; that stretch reads ATRRGAMDRRKAKDLE. In terms of domain architecture, Ras-associating spans 104–190; the sequence is KKQVIKVYSE…NKLYLRKNYA (87 aa). The PH domain maps to 232–340; sequence YPEIHGFLHA…WVTAIRLLKY (109 aa). Phosphoserine occurs at positions 370 and 373. Residues 437–533 enclose the SH2 domain; the sequence is WFHHRISRDE…VLPCKLKHYC (97 aa).

This sequence belongs to the GRB7/10/14 family. Interacts with the cytoplasmic domain of the autophosphorylated insulin receptor, through the SH2 domain. Interacts with GRB14 (via BPS domain); this interaction protects the tyrosines in the activation loop on INSR from dephosphorylation. Binds to the ankyrin repeat region of TNKS2 via its N-terminus. Interacts with activated NRAS. Interacts (via SH2 domain) with TEK/TIE2 (tyrosine phosphorylated). In terms of processing, phosphorylated on serine residues. Phosphorylated on tyrosine residues by TEK/TIE2.

It is found in the cytoplasm. The protein localises to the endosome membrane. Its function is as follows. Adapter protein which modulates coupling of cell surface receptor kinases with specific signaling pathways. Binds to, and suppresses signals from, the activated insulin receptor (INSR). Potent inhibitor of insulin-stimulated MAPK3 phosphorylation. Plays a critical role regulating PDPK1 membrane translocation in response to insulin stimulation and serves as an adapter protein to recruit PDPK1 to activated insulin receptor, thus promoting PKB/AKT1 phosphorylation and transduction of the insulin signal. This Rattus norvegicus (Rat) protein is Growth factor receptor-bound protein 14 (Grb14).